The following is a 1190-amino-acid chain: MSDSYYQGEYIKHPVLYELSHKYGFTENLPESCMSIRLEEIKEAIRREIRKELKIKEGAEKLREVAKDRRSLSDVAVLVKKSKSKLAELKSELQELESQILLTSANTAVNSNGQESITACIDPNGGFLVSGAVGGLGGGNTALEGGAPATANDKVLASLEKQLQIEMKVKTGAENMIQSLGIGCDKKLLAEAHQMLADSKAKIEFLRLRIIKVKQNREQADRLKASRQMIDEHGQTIGGNNSSQPQSLETTLEERIEELRHRLRIEAAVVDGAKNVIRTLQTANRAPDKKALQEAHGRLSESSRKLDLLRYSLDLRRQELPADSPAAQQLKTELQIVQLSTSPAPVTYTSLQSGQAGILGGKPYQSVSSLGRCASVTGKLEVRLLGCQDLLEDVPGRSRRDKDNNSSPGDLRSFVKGVTSRSSSKSYSVKDETSIEIMAVIKLDNITVGQTSWKQCSQQAWDQRFSIDLDRSRELEIGVYWRDWRSLCAVKVLRLEEFIDDVRHGMALQLEPQGLLFAEVKFLNPMISQKPKLRRQRMIFNRQQAKNISRAKQMNINVATWGRLLKRNAPNHVHMGSAGSGSSLTGSSPMVVGGSRDSESPISRTPSSDALVEPEPYTPGEQAQNLEFDPDAGINEHVETPGEYPDPAASGLSGMRPLSMHMQGISVLPPESPPVATGAAGRPNTLSLQMPGASKGQVIQGGRTAAPTTAPPPPPVLKATSTTPILDQEVIPQLGKLYVGSSQQQYAQQSSPIIQEPATPTIYGNSAAAGAPQFPQPAQRQEKQPPQQQPIYANQYELNVAKAAAAASVYSPSSSTTSNSNQQQQQQRRNVARGLQYRESGGLETGRAGKQPPNAGMLSMDNFRLLSVLGRGHFGKVILSQLRSNNQYYAIKALKKGDIIARDEVESLLSEKRIFEVANAMRHPFLVNLYSCFQTEQHVCFVMEYAAGGDLMMHIHTDVFLEPRAVFYAACVVLGLQYLHENKIIYRDLKLDNLLLDTEGYVKIADFGLCKEGMGFGDRTGTFCGTPEFLAPEVLTETSYTRAVDWWGLGVLIFEMLVGESPFPGDDEEEVFDSIVNDEVRYPRFLSLEAIAVMRRLLRKNPERRLGSSERDAEDVKKQAFFRSIVWDDLLLRKVKPPFVPTINHLEDVSNFDEEFTSEKAQLTPPKEPRHLTEEEQLLFQDFSYTAEWC.

REM-1 domains follow at residues Asn28–Leu102, Ala142–Gln219, and Ser242–Ala322. One can recognise a C2 domain in the interval Leu359–Leu515. The segment covering Pro395–Asn404 has biased composition (basic and acidic residues). Disordered regions lie at residues Pro395–Val415, His572–Pro715, Pro757–Gln787, and Ser811–Ala832. Composition is skewed to low complexity over residues Gly576–Ser588 and Ala767–Gln787. Positions Phe863–Phe1122 constitute a Protein kinase domain. Residues Leu869–Val877 and Lys892 contribute to the ATP site. Asp988 serves as the catalytic Proton acceptor. The 68-residue stretch at Arg1123–Cys1190 folds into the AGC-kinase C-terminal domain.

Belongs to the protein kinase superfamily. Ser/Thr protein kinase family. In terms of assembly, interacts (via N-terminus) with Rho1 (via REM repeats), Rac1 (via REM 1 repeat) and Rac2. Post-translationally, phosphorylated. Autophosphorylated; autophosphorylation is stimulated by GTP-bound Rho/Rac GTPases.

It is found in the cytoplasm. Its subcellular location is the nucleus. It localises to the membrane. The protein localises to the cell projection. The protein resides in the lamellipodium. It is found in the cytoskeleton. Its subcellular location is the cleavage furrow. It localises to the midbody. The protein localises to the cell junction. It catalyses the reaction L-seryl-[protein] + ATP = O-phospho-L-seryl-[protein] + ADP + H(+). The catalysed reaction is L-threonyl-[protein] + ATP = O-phospho-L-threonyl-[protein] + ADP + H(+). Activated by lipids, particularly cardiolipin and to a lesser extent by other acidic phospholipids and unsaturated fatty acids. Two specific sites, Thr-1022 (activation loop of the kinase domain) and Thr-1164 (turn motif), may be needed to be phosphorylated for its full activation. Kinase activity is activated upon binding to GTP-bound Rho/Rac GTPases. Its function is as follows. Pkc-related serine/threonine-protein kinase and Rho/Rac effector protein that participates in specific signal transduction responses in the cell. May play a role in the regulation of cell cycle progression, actin cytoskeleton assembly, cell migration, cell adhesion and transcription activation signaling processes. Plays a role in regulating Rho-mediated dorsal closure during embryogenesis. In Drosophila melanogaster (Fruit fly), this protein is Serine/threonine-protein kinase N (Pkn).